A 216-amino-acid polypeptide reads, in one-letter code: SPbeta prophage-derived uncharacterized protein YomX (216 aa).

The chain is SPbeta prophage-derived uncharacterized protein YomX (yomX) from Bacillus subtilis (strain 168).